The primary structure comprises 149 residues: Protegrin-4 (149 aa).

Residues 1 to 29 form the signal peptide; sequence METQRASLCLGRWSLWLLLLALVVPSASA. The propeptide occupies 30 to 130; the sequence is QALSYREAVL…DITCNEVQGV (101 aa). Residues 61-80 are disordered; that stretch reads DQPPKADEDPGTPKPVSFTV. 4 disulfide bridges follow: Cys-85–Cys-96, Cys-107–Cys-124, Cys-136–Cys-145, and Cys-138–Cys-143. Arg-148 bears the Arginine amide mark.

The protein belongs to the cathelicidin family.

It is found in the secreted. Microbicidal activity. This chain is Protegrin-4 (NPG4), found in Sus scrofa (Pig).